A 520-amino-acid polypeptide reads, in one-letter code: Intermediate filament protein ON3 (520 aa).

The segment covering 1-27 (MSYTKKTSYSVKSSSSGSVPRSFSSMS) has biased composition (low complexity). The interval 1–33 (MSYTKKTSYSVKSSSSGSVPRSFSSMSYSGPSV) is disordered. The interval 1–108 (MSYTKKTSYS…DPNIQVVRTQ (108 aa)) is head. Positions 109–144 (EKEQMKSLNNRFASFIDKVRFLEQQNKMLETKWSLL) are coil 1A. The IF rod domain maps to 109-420 (EKEQMKSLNN…KLLEGEEDRL (312 aa)). Positions 145 to 157 (QNQTATRSNIDAM) are linker 1. The tract at residues 158 to 253 (FEAYINNLRR…QIFEEEIREL (96 aa)) is coil 1B. The segment at 254 to 273 (QSQIKDTSVVVEMDNSRNLD) is linker 12. The interval 274–420 (MDAIVAEVRA…KLLEGEEDRL (147 aa)) is coil 2. Residues 421-520 (LSGIKSVNIS…VSESSEVVQD (100 aa)) are tail.

Belongs to the intermediate filament family.

Functionally, one of the non-neuronal predominant intermediate filament proteins of the visual pathway. The protein is Intermediate filament protein ON3 of Carassius auratus (Goldfish).